Here is a 429-residue protein sequence, read N- to C-terminus: Histidine--tRNA ligase (429 aa).

It belongs to the class-II aminoacyl-tRNA synthetase family. In terms of assembly, homodimer.

It is found in the cytoplasm. The enzyme catalyses tRNA(His) + L-histidine + ATP = L-histidyl-tRNA(His) + AMP + diphosphate + H(+). This is Histidine--tRNA ligase from Alkalilimnicola ehrlichii (strain ATCC BAA-1101 / DSM 17681 / MLHE-1).